A 431-amino-acid chain; its full sequence is Serine--tRNA ligase (431 aa).

235–237 (TAE) is a binding site for L-serine. Residues 266–268 (RRE) and V282 each bind ATP. E289 contributes to the L-serine binding site. 353 to 356 (EASS) is an ATP binding site. L-serine is bound at residue S389.

Belongs to the class-II aminoacyl-tRNA synthetase family. Type-1 seryl-tRNA synthetase subfamily. As to quaternary structure, homodimer. The tRNA molecule binds across the dimer.

The protein resides in the cytoplasm. The catalysed reaction is tRNA(Ser) + L-serine + ATP = L-seryl-tRNA(Ser) + AMP + diphosphate + H(+). It catalyses the reaction tRNA(Sec) + L-serine + ATP = L-seryl-tRNA(Sec) + AMP + diphosphate + H(+). It participates in aminoacyl-tRNA biosynthesis; selenocysteinyl-tRNA(Sec) biosynthesis; L-seryl-tRNA(Sec) from L-serine and tRNA(Sec): step 1/1. In terms of biological role, catalyzes the attachment of serine to tRNA(Ser). Is also able to aminoacylate tRNA(Sec) with serine, to form the misacylated tRNA L-seryl-tRNA(Sec), which will be further converted into selenocysteinyl-tRNA(Sec). This chain is Serine--tRNA ligase, found in Pelodictyon phaeoclathratiforme (strain DSM 5477 / BU-1).